The chain runs to 283 residues: Alpha-ketoglutarate-dependent taurine dioxygenase (283 aa).

Taurine contacts are provided by His70, Tyr73, and Asn95. Fe cation is bound by residues His99 and Asp101. Val102 is a binding site for taurine. Thr126 is a 2-oxoglutarate binding site. 3-hydroxytryptophan; by autocatalysis occurs at positions 128, 240, and 248. His255 is a binding site for Fe cation. 2-oxoglutarate contacts are provided by His255, Arg266, and Arg270. Arg270 contributes to the taurine binding site.

It belongs to the TfdA dioxygenase family. As to quaternary structure, homodimer. Was later shown to be a homotetramer arranged as a dimer of two dimers. Fe(2+) serves as cofactor.

The enzyme catalyses taurine + 2-oxoglutarate + O2 = aminoacetaldehyde + sulfite + succinate + CO2 + H(+). It participates in organosulfur degradation; taurine degradation via aerobic pathway; aminoacetaldehyde and sulfite from taurine: step 1/1. Its activity is regulated as follows. Activated by ascorbate and inhibited by divalent metal ions such as zinc, copper and cobalt. Catalyzes the alpha-ketoglutarate-dependent hydroxylation of taurine yielding sulfite and aminoacetaldehyde after decomposition of an unstable intermediate. Is required for the utilization of taurine (2-aminoethanesulfonate) as an alternative sulfur source for growth in the absence of sulfate. To a lesser extent, pentanesulfonate, 3-(N-morpholino)propanesulfonate and 1,3-dioxo-2-isoindolineethanesulfonate are also desulfonated by this enzyme in vitro; however, desulfonation by TauD of organosulfonates other than taurine seem to be of little or no importance for sulfur metabolism in vivo. The polypeptide is Alpha-ketoglutarate-dependent taurine dioxygenase (tauD) (Escherichia coli (strain K12)).